Consider the following 128-residue polypeptide: Type III secretion protein HrcQb (128 aa).

Positions 1-21 (MSTEDLYQEDVEMLDDYEDPS) are enriched in acidic residues. Positions 1 to 57 (MSTEDLYQEDVEMLDDYEDPSTEQHWSEEDGEPSGYATAEPDDHAAQEEQDEPPALD) are disordered. The segment at 50–128 (QDEPPALDSL…LQITRLVTRS (79 aa)) is hrcQb-C. The interval 78 to 81 (RRLD) is dimer-dimer interface.

This sequence belongs to the FliN/MopA/SpaO family. As to quaternary structure, homotetramer. The four monomers assemble into two tightly bound homodimers. Interacts with HrcQa.

Its subcellular location is the cytoplasm. Functionally, component of the type III secretion system, which is required for effector protein delivery, parasitism, and pathogenicity. Probably participates in the formation of a C-ring-like assembly along with HrcQa. The sequence is that of Type III secretion protein HrcQb (hrcQb) from Pseudomonas savastanoi pv. phaseolicola (Pseudomonas syringae pv. phaseolicola).